A 426-amino-acid polypeptide reads, in one-letter code: MTDSENESTETDSLMTFDDYISKELPEHLQRLIMENLKGSTTNDLKQTSNNSEFNVSKNGSFKGLDDAIQALQMQSVLHPSSLGSLATSSKFSGWSFAQGFFVGQLSIVLLFIFFLKFFIFSDEPSKSKNPKPAASRHRSKFKEYPFISREFLTSLVRKGAKQHYELNEEAENEHLQELALILEKTYYNVDVHPAESLDWFNVLVAQIIQQFRSEAWHRDNILHSLNDFIGRKSPDLPEYLDTIKITELDTGDDFPIFSNCRIQYSPNSGNKKLEAKIDIDLNDHLTLGVETKLLLNYPKPGIAALPINLVVSIVRFQACLTVSLTNAEEFASTSNGSSSENGMEGNSGYFLMFSFSPEYRMEFEIKSLIGSRSKLENIPKIGSVIEYQIKKWFVERCVEPRFQFVRLPSMWPRSKNTREEKPTEL.

Over 1 to 100 (MTDSENESTE…KFSGWSFAQG (100 aa)) the chain is Lumenal. A helical membrane pass occupies residues 101–121 (FFVGQLSIVLLFIFFLKFFIF). Over 122-426 (SDEPSKSKNP…NTREEKPTEL (305 aa)) the chain is Cytoplasmic. The 216-residue stretch at 194-409 (PAESLDWFNV…EPRFQFVRLP (216 aa)) folds into the SMP-LTD domain.

Belongs to the MMM1 family. Homodimer. Component of the ER-mitochondria encounter structure (ERMES) or MDM complex, composed of MMM1, MDM10, MDM12 and MDM34. An MMM1 homodimer associates with one molecule of MDM12 on each side in a pairwise head-to-tail manner, and the SMP-LTD domains of MMM1 and MDM12 generate a continuous hydrophobic tunnel for phospholipid trafficking.

It localises to the endoplasmic reticulum membrane. Its function is as follows. Component of the ERMES/MDM complex, which serves as a molecular tether to connect the endoplasmic reticulum (ER) and mitochondria. Components of this complex are involved in the control of mitochondrial shape and protein biogenesis, and function in nonvesicular lipid trafficking between the ER and mitochondria. The MDM12-MMM1 subcomplex functions in the major beta-barrel assembly pathway that is responsible for biogenesis of all outer membrane beta-barrel proteins, and acts in a late step after the SAM complex. The MDM10-MDM12-MMM1 subcomplex further acts in the TOM40-specific pathway after the action of the MDM12-MMM1 complex. Essential for establishing and maintaining the structure of mitochondria and maintenance of mtDNA nucleoids. This Saccharomyces cerevisiae (strain AWRI1631) (Baker's yeast) protein is Maintenance of mitochondrial morphology protein 1.